Reading from the N-terminus, the 211-residue chain is Thymidylate kinase (211 aa).

Position 11-18 (11-18 (GPDGAGKT)) interacts with ATP.

The protein belongs to the thymidylate kinase family.

It carries out the reaction dTMP + ATP = dTDP + ADP. Phosphorylation of dTMP to form dTDP in both de novo and salvage pathways of dTTP synthesis. This Streptococcus pyogenes serotype M49 (strain NZ131) protein is Thymidylate kinase.